The chain runs to 469 residues: uncharacterized protein (469 aa).

The stretch at 11-65 forms a coiled coil; that stretch reads LFISVAFSQESVEDLKRLLEEYKKKIQEIERRLEELEKAKKEEEKKKEAVALKPT.

This is an uncharacterized protein from Aquifex aeolicus (strain VF5).